A 185-amino-acid polypeptide reads, in one-letter code: NADH-quinone oxidoreductase subunit B (185 aa).

[4Fe-4S] cluster contacts are provided by C38, C39, C104, and C133.

Belongs to the complex I 20 kDa subunit family. As to quaternary structure, NDH-1 is composed of 14 different subunits. Subunits NuoB, C, D, E, F, and G constitute the peripheral sector of the complex. [4Fe-4S] cluster is required as a cofactor.

Its subcellular location is the cell membrane. It catalyses the reaction a quinone + NADH + 5 H(+)(in) = a quinol + NAD(+) + 4 H(+)(out). Functionally, NDH-1 shuttles electrons from NADH, via FMN and iron-sulfur (Fe-S) centers, to quinones in the respiratory chain. The immediate electron acceptor for the enzyme in this species is believed to be a menaquinone. Couples the redox reaction to proton translocation (for every two electrons transferred, four hydrogen ions are translocated across the cytoplasmic membrane), and thus conserves the redox energy in a proton gradient. The chain is NADH-quinone oxidoreductase subunit B from Cutibacterium acnes (strain DSM 16379 / KPA171202) (Propionibacterium acnes).